Here is a 64-residue protein sequence, read N- to C-terminus: Disintegrin VA6 (64 aa).

Residues asparagine 1–serine 64 enclose the Disintegrin domain. 4 disulfides stabilise this stretch: cysteine 6/cysteine 29, cysteine 20/cysteine 26, cysteine 25/cysteine 50, and cysteine 38/cysteine 57. A Cell attachment site motif is present at residues arginine 42–aspartate 44.

Belongs to the venom metalloproteinase (M12B) family. P-II subfamily. P-IId sub-subfamily. As to quaternary structure, homodimer; disulfide-linked. Expressed by the venom gland.

Its subcellular location is the secreted. Its function is as follows. Poor inhibitor of platelet aggregation. The disintegrin inhibits the adhesion of cells expressing the RGD-dependent integrin alpha-5/beta-1 (ITGA5/ITGB1) to immobilized fibronectin. Inhibition on alpha-IIb/beta-3 (ITGA2B/ITGB3) is low, and there is no inhibition on alpha-1/beta-1 (ITGA1/ITGB1), alpha-2/beta-1 (ITGA2/ITGB1) and alpha-6/beta-1 (ITGA6/ITGB1). The sequence is that of Disintegrin VA6 from Vipera ammodytes ammodytes (Western sand viper).